The sequence spans 197 residues: Holliday junction branch migration complex subunit RuvA (197 aa).

Positions 1–65 are domain I; that stretch reads MISQVRGTIM…EDAWHLYGFA (65 aa). Positions 66–140 are domain II; that stretch reads HAYERAVFQK…DKIDAVGPAP (75 aa). Positions 140–144 are flexible linker; that stretch reads PATGT. The interval 145 to 197 is domain III; the sequence is APSPLGDDAVRALIALGYNQTEADRAVRAVVESGAPKDVSSLVRGALSRLTAK.

This sequence belongs to the RuvA family. As to quaternary structure, homotetramer. Forms an RuvA(8)-RuvB(12)-Holliday junction (HJ) complex. HJ DNA is sandwiched between 2 RuvA tetramers; dsDNA enters through RuvA and exits via RuvB. An RuvB hexamer assembles on each DNA strand where it exits the tetramer. Each RuvB hexamer is contacted by two RuvA subunits (via domain III) on 2 adjacent RuvB subunits; this complex drives branch migration. In the full resolvosome a probable DNA-RuvA(4)-RuvB(12)-RuvC(2) complex forms which resolves the HJ.

The protein localises to the cytoplasm. Its function is as follows. The RuvA-RuvB-RuvC complex processes Holliday junction (HJ) DNA during genetic recombination and DNA repair, while the RuvA-RuvB complex plays an important role in the rescue of blocked DNA replication forks via replication fork reversal (RFR). RuvA specifically binds to HJ cruciform DNA, conferring on it an open structure. The RuvB hexamer acts as an ATP-dependent pump, pulling dsDNA into and through the RuvAB complex. HJ branch migration allows RuvC to scan DNA until it finds its consensus sequence, where it cleaves and resolves the cruciform DNA. This is Holliday junction branch migration complex subunit RuvA from Gemmatimonas aurantiaca (strain DSM 14586 / JCM 11422 / NBRC 100505 / T-27).